Reading from the N-terminus, the 95-residue chain is Transcription and mRNA export factor ENY2-2 (95 aa).

The protein belongs to the ENY2 family. In terms of assembly, component of the nuclear pore complex (NPC)-associated TREX-2 complex (transcription and export complex 2). Component of the SAGA transcription coactivator-HAT complex. Within the SAGA complex, participates in a subcomplex of SAGA called the DUB module (deubiquitination module).

The protein localises to the nucleus. The protein resides in the nucleoplasm. In terms of biological role, involved in mRNA export coupled transcription activation by association with both the TREX-2 and the SAGA complexes. The transcription regulatory histone acetylation (HAT) complex SAGA is a multiprotein complex that activates transcription by remodeling chromatin and mediating histone acetylation and deubiquitination. Within the SAGA complex, participates in a subcomplex that specifically deubiquitinates histones. The SAGA complex is recruited to specific gene promoters by activators, where it is required for transcription. The TREX-2 complex functions in docking export-competent ribonucleoprotein particles (mRNPs) to the nuclear entrance of the nuclear pore complex (nuclear basket). TREX-2 participates in mRNA export and accurate chromatin positioning in the nucleus by tethering genes to the nuclear periphery. This chain is Transcription and mRNA export factor ENY2-2 (eny2-2), found in Salmo salar (Atlantic salmon).